A 347-amino-acid chain; its full sequence is MDKIKALDAALSQIERSFGKGSIMRLGQKEQVVEIETIPTGSLSLDIALGVGGLPKGRIVEIYGPESSGKTTLALHAIAEAQKNGGVCAFIDAEHALDPIYARKLGVDLENLFISQPDTGEQALEITETLVRSGAVDVLVVDSVAALTPRAEIDGEMGDALPGLQARLMSKALRKLTASIFRSNCMVIFINQIRMKIGVMFGSPETTTGGNALKFYASVRLDIRRIGSIKDRDMIVGNQTRVKVVKNKLAPPFKQVEFDIIYGEGISKLGELIDLGVKVGTVEKSGSWFSYNSQRLGQGRENAKQFLREHPEIATEIETALRQNAGLIAIELLENAGSENTESDEVI.

ATP is bound at residue 64-71 (GPESSGKT).

Belongs to the RecA family.

Its subcellular location is the cytoplasm. Can catalyze the hydrolysis of ATP in the presence of single-stranded DNA, the ATP-dependent uptake of single-stranded DNA by duplex DNA, and the ATP-dependent hybridization of homologous single-stranded DNAs. It interacts with LexA causing its activation and leading to its autocatalytic cleavage. The protein is Protein RecA of Bartonella henselae (strain ATCC 49882 / DSM 28221 / CCUG 30454 / Houston 1) (Rochalimaea henselae).